We begin with the raw amino-acid sequence, 320 residues long: Short-chain dehydrogenase/reductase ARMGADRAFT_1169971 (320 aa).

A helical membrane pass occupies residues 19–39 (KVAVVTGANSGIGLYILFHVA). Residues Ile-30, Asp-78, Asn-105, and Lys-136 each coordinate NADP(+). N-linked (GlcNAc...) asparagine glycosylation is present at Asn-157. The active-site Proton donor is Ser-159. NADP(+) is bound by residues Tyr-192, Lys-196, Val-227, and Ser-229. Tyr-192 (proton acceptor) is an active-site residue. The active-site Lowers pKa of active site Tyr is Lys-196. The chain crosses the membrane as a helical span at residues 235–255 (LFTSLMFGTIINWVFSLFFIS).

It belongs to the short-chain dehydrogenases/reductases (SDR) family.

The protein resides in the membrane. Its pathway is secondary metabolite biosynthesis. Short-chain dehydrogenase/reductase, part of the gene cluster that mediates the biosynthesis of melleolides, a range of antifungal and phytotoxic polyketide derivatives composed of an orsellinic acid (OA) moiety esterified to various sesquiterpene alcohols. The first step in melleolides biosynthesis is performed by the delta(6)-protoilludene synthase PRO1 which catalyzes the cyclization of farnesyl diphosphate to protoilludene. The orsellinic acid synthase armB produces OA by condensing acetyl-CoA with 3 malonyl-CoA units in a three-round chain elongation reaction folowed by a C2-C7 ring closure. ArmB further catalyzes the trans-esterification of OA to the various sesquiterpene alcohols resulting from the hydroxylation of protoilludene. The melleolides cluster also includes 5 cytochrome P450 monooxygenases, 4 NAD(+)-dependent oxidoreductases, one flavin-dependent oxidoreductase, and one O-methyltransferase. The cytochrome P450 monooxygenases may be involved in protoilludene hydroxylation to elaborate melleolides with multiple alcohol groups, such as melleolide D, which carries alcohol functionalities at C-4, C-5, C-10, and C-13. The role of the NAD(+)-dependent enzymes remains unknown. Numerous melleolides, including arnamial, show 5'-O-methylation of the aromatic moiety which may be catalyzed by the methyltransferase encoded in the cluster. The flavin-dependent oxidoreductase might represent the dehydrogenase yielding the aldehyde in position 1 of arnamial and other melleolides. Finally, several halogenase localized outside of the cluster, are able to catalyze the transfer of a single chlorine atom to the melleolide backbone, resulting in a 6'-chloromelleolide product. The sequence is that of Short-chain dehydrogenase/reductase ARMGADRAFT_1169971 from Armillaria gallica (Bulbous honey fungus).